A 3036-amino-acid chain; its full sequence is DmX-like protein 2 (3036 aa).

3 WD repeats span residues 108–145, 167–207, and 230–278; these read FLSS…ILEE, KTSV…KSSI, and AHPR…EDCL. Residue serine 326 is modified to Phosphoserine. The disordered stretch occupies residues 417–480; that stretch reads KQVDHENDDA…EGSPRTYSRL (64 aa). A compositionally biased stretch (acidic residues) spans 422–434; that stretch reads ENDDADREDEEHS. Residues 435-473 show a composition bias toward basic and acidic residues; the sequence is QEDRERGLHMKLDHDLSLDRESEAGTGSSEHEDGEREGS. Position 473 is a phosphoserine (serine 473). The stretch at 492-532 is one WD 4 repeat; sequence DRKIETLLTEWNKNPDMLFTIHPVDGTFLVWHVKYLDEYNP. At serine 588 the chain carries Phosphoserine. WD repeat units lie at residues 595–634, 751–803, and 878–920; these read HSRS…KSAF, LHTS…RKLL, and QPSQ…VQAC. The disordered stretch occupies residues 932–959; that stretch reads SLLSVPGQKNVDSSPETSPSVSPMPHSS. 2 positions are modified to phosphoserine: serine 944 and serine 945. Over residues 949–959 the composition is skewed to low complexity; it reads SPSVSPMPHSS. A WD 8 repeat occupies 1000-1037; the sequence is LSSSSIYPVCLAPYLVVTTCSDNKVRFWKCCMEANPEC. Serine 1140, serine 1143, and serine 1151 each carry phosphoserine. WD repeat units lie at residues 1163 to 1204 and 1244 to 1281; these read PNIK…VTEQ and GTPS…VKFG. Residues serine 1287 and serine 1400 each carry the phosphoserine modification. Threonine 1417 is modified (phosphothreonine). Serine 1857 is subject to Phosphoserine. The span at 1927-1936 shows a compositional bias: basic and acidic residues; the sequence is ISHRMDDVPS. The disordered stretch occupies residues 1927–1952; the sequence is ISHRMDDVPSHSKALSDGNGSSGIEW. Position 1984 is a phosphoserine (serine 1984). The interval 1999–2033 is disordered; the sequence is KSTDAREKDKQSDQKASDPNMLLTPQEEDDPEGDT. Basic and acidic residues predominate over residues 2001-2014; sequence TDAREKDKQSDQKA. Residue threonine 2022 is modified to Phosphothreonine. Residues 2024-2033 show a composition bias toward acidic residues; that stretch reads QEEDDPEGDT. A coiled-coil region spans residues 2122-2153; sequence GSYERHQIERRRLQAKREHAERRKSWLQKNQD. A phosphoserine mark is found at serine 2399 and serine 2640. WD repeat units follow at residues 2761–2800, 2804–2843, 2850–2892, 2898–2937, 2940–2979, and 2992–3030; these read RNLH…QLVC, AGNA…SNPK, CHSK…GNSL, CHDH…LIHT, AHDS…LIHS, and NIGA…NIPN.

Interacts with MADD and RAB3GAP.

It localises to the cytoplasmic vesicle. The protein resides in the secretory vesicle. It is found in the synaptic vesicle membrane. Its subcellular location is the neuronal dense core vesicle. Functionally, may serve as a scaffold protein for MADD and RAB3GA on synaptic vesicles. Plays a role in the brain as a key controller of neuronal and endocrine homeostatic processes. In Homo sapiens (Human), this protein is DmX-like protein 2 (DMXL2).